Reading from the N-terminus, the 194-residue chain is GTP cyclohydrolase 1 (194 aa).

The Zn(2+) site is built by Cys-85, His-88, and Cys-156.

Belongs to the GTP cyclohydrolase I family. Toroid-shaped homodecamer, composed of two pentamers of five dimers.

The catalysed reaction is GTP + H2O = 7,8-dihydroneopterin 3'-triphosphate + formate + H(+). Its pathway is cofactor biosynthesis; 7,8-dihydroneopterin triphosphate biosynthesis; 7,8-dihydroneopterin triphosphate from GTP: step 1/1. In Bacteroides fragilis (strain YCH46), this protein is GTP cyclohydrolase 1.